Consider the following 424-residue polypeptide: Serine/threonine-protein kinase H1 (424 aa).

Gly2 carries the N-myristoyl glycine lipid modification. Cys3 carries the S-palmitoyl cysteine lipid modification. A disordered region spans residues Lys49–Ala81. A compositionally biased stretch (polar residues) spans Gln57–Glu72. One can recognise a Protein kinase domain in the interval Tyr98–Val355. ATP-binding positions include Ile104–Val112 and Lys127. Asp218 acts as the Proton acceptor in catalysis. The disordered stretch occupies residues Arg378–Arg407. A phosphoserine; by autocatalysis mark is found at Ser380 and Ser381. Low complexity predominate over residues Ser385–Thr398.

This sequence belongs to the protein kinase superfamily. CAMK Ser/Thr protein kinase family. Homodimer. Post-translationally, autophosphorylated on serine residues. Myristoylated. Required for membrane association. Prerequisite for palmitoylation to occur. In terms of processing, palmitoylated.

Its subcellular location is the golgi apparatus. It is found in the cytoplasm. The protein resides in the cytoskeleton. It localises to the microtubule organizing center. The protein localises to the centrosome. Its subcellular location is the nucleus speckle. It is found in the endoplasmic reticulum membrane. The protein resides in the cell membrane. The enzyme catalyses L-seryl-[protein] + ATP = O-phospho-L-seryl-[protein] + ADP + H(+). The catalysed reaction is L-threonyl-[protein] + ATP = O-phospho-L-threonyl-[protein] + ADP + H(+). With respect to regulation, activity depends on Ca(2+) concentration. Functionally, may be a SFC-associated serine kinase (splicing factor compartment-associated serine kinase) with a role in intranuclear SR protein (non-snRNP splicing factors containing a serine/arginine-rich domain) trafficking and pre-mRNA processing. The sequence is that of Serine/threonine-protein kinase H1 (PSKH1) from Bos taurus (Bovine).